The chain runs to 501 residues: Glutamate--tRNA ligase (501 aa).

Positions 11-21 match the 'HIGH' region motif; that stretch reads PSPTGPLHIGG. The short motif at 260–264 is the 'KMSKS' region element; it reads KLSKR. Lys-263 provides a ligand contact to ATP.

It belongs to the class-I aminoacyl-tRNA synthetase family. Glutamate--tRNA ligase type 1 subfamily. In terms of assembly, monomer.

It is found in the cytoplasm. It catalyses the reaction tRNA(Glu) + L-glutamate + ATP = L-glutamyl-tRNA(Glu) + AMP + diphosphate. Functionally, catalyzes the attachment of glutamate to tRNA(Glu) in a two-step reaction: glutamate is first activated by ATP to form Glu-AMP and then transferred to the acceptor end of tRNA(Glu). The protein is Glutamate--tRNA ligase of Flavobacterium johnsoniae (strain ATCC 17061 / DSM 2064 / JCM 8514 / BCRC 14874 / CCUG 350202 / NBRC 14942 / NCIMB 11054 / UW101) (Cytophaga johnsonae).